A 1625-amino-acid chain; its full sequence is E3 ubiquitin-protein ligase KEG (1625 aa).

An RING-type zinc finger spans residues 10-56; the sequence is CSVCHTRYNEDERVPLLLQCGHGFCKDCLSKMFSTSSDTTLTCPRCR. Positions 91 to 106 are enriched in acidic residues; the sequence is YTDDEDDDDEEDGSDE. Residues 91-110 form a disordered region; the sequence is YTDDEDDDDEEDGSDEDGAR. The Protein kinase domain maps to 141-427; that stretch reads RQIGEESSSG…TFNAMLATFL (287 aa). ATP is bound by residues 147–155 and K176; that span reads SSSGGFGGV. ANK repeat units follow at residues 467 to 496, 510 to 540, 544 to 573, 579 to 608, 612 to 641, 647 to 676, 685 to 720, 725 to 754, 758 to 787, 791 to 826, and 832 to 863; these read DNPNNLHRVVLEGDFEGVRNILAKAAAGGG, DGQSALHLACRRGSAELVEAILEYGEANVDI, DGDPPLVFALAAGSPQCVHVLIKKGANVRS, SGPSVAHVCSYHGQPDCMRELLVAGADPNA, EGETVLHRAVAKKYTDCAIVILENGGSRSM, KCLTPLHMCVATWNVAVIKRWVEVSSPEEI, PVGTALCMAASIRKDHEKEGRELVQILLAAGADPTA, HGRTALHTAAMANNVELVRVILDAGVNANI, HNTIPLHMALARGANSCVSLLLESGSDCNI, EGDNAFHIAADAAKMIRENLDWLIVMLRSPDAAVDV, and KTVRDFLEALPREWISEDLMEALLKRGVHLSP.

In terms of assembly, interacts with ABI5 and EDR1. In terms of processing, autophosphotylated and autoubiquitinated in vitro. Post-translationally, phosphorylation enhances self-ubiquitination. Autoubiquitinated in response to abscisic acid (ABA) and subsequently targeted to proteolysis. As to expression, expressed in all tissues of young seedlings. In flowering plants, only detected in the youngest part of the stem, anthers and the receptacle of immature siliques. Not found in mature leave, older parts of the stem, flower parts other than anthers or mature siliques.

The protein resides in the golgi apparatus. Its subcellular location is the trans-Golgi network. It localises to the early endosome. The catalysed reaction is L-seryl-[protein] + ATP = O-phospho-L-seryl-[protein] + ADP + H(+). It catalyses the reaction L-threonyl-[protein] + ATP = O-phospho-L-threonyl-[protein] + ADP + H(+). The enzyme catalyses S-ubiquitinyl-[E2 ubiquitin-conjugating enzyme]-L-cysteine + [acceptor protein]-L-lysine = [E2 ubiquitin-conjugating enzyme]-L-cysteine + N(6)-ubiquitinyl-[acceptor protein]-L-lysine.. It participates in protein modification; protein ubiquitination. Mediates E2-dependent protein ubiquitination. Acts as a negative regulator of abscisic acid signaling. Required for ABI5 degradation, by mediating its ubiquitination. Together with EDR1, may regulate endocytic trafficking and/or the formation of signaling complexes on trans-Golgi network (TGN)/ early endosome (EE) vesicles during stress responses. This Arabidopsis thaliana (Mouse-ear cress) protein is E3 ubiquitin-protein ligase KEG (KEG).